We begin with the raw amino-acid sequence, 117 residues long: G antigen 1 (117 aa).

Positions 1–117 (MSWRGRSTYY…PEEGEGQSQC (117 aa)) are disordered. 2 stretches are compositionally biased toward acidic residues: residues 32-45 (FSDEVEPATPEEGE) and 87-96 (ECEDGPDGQE).

Belongs to the GAGE family. In terms of tissue distribution, expressed in a variety of tumor tissues but not in normal tissues, except testis.

Its function is as follows. Antigen, recognized on melanoma by autologous cytolytic T-lymphocytes. This Homo sapiens (Human) protein is G antigen 1.